We begin with the raw amino-acid sequence, 476 residues long: Aspartyl/glutamyl-tRNA(Asn/Gln) amidotransferase subunit B (476 aa).

The protein belongs to the GatB/GatE family. GatB subfamily. Heterotrimer of A, B and C subunits.

It carries out the reaction L-glutamyl-tRNA(Gln) + L-glutamine + ATP + H2O = L-glutaminyl-tRNA(Gln) + L-glutamate + ADP + phosphate + H(+). The enzyme catalyses L-aspartyl-tRNA(Asn) + L-glutamine + ATP + H2O = L-asparaginyl-tRNA(Asn) + L-glutamate + ADP + phosphate + 2 H(+). Functionally, allows the formation of correctly charged Asn-tRNA(Asn) or Gln-tRNA(Gln) through the transamidation of misacylated Asp-tRNA(Asn) or Glu-tRNA(Gln) in organisms which lack either or both of asparaginyl-tRNA or glutaminyl-tRNA synthetases. The reaction takes place in the presence of glutamine and ATP through an activated phospho-Asp-tRNA(Asn) or phospho-Glu-tRNA(Gln). The sequence is that of Aspartyl/glutamyl-tRNA(Asn/Gln) amidotransferase subunit B from Lactobacillus johnsonii (strain CNCM I-12250 / La1 / NCC 533).